Here is a 632-residue protein sequence, read N- to C-terminus: MASAPEVESVKTPDPASTKTQHTSIAEIHTADQTWNNESNTRLPPNHRHHLRDTRYDPWTHNGSPPAEISKIPPRAKVLILGAGYGGLLFAVRLLEAGFQPSDILLVDAAHGFGGTWYWNRYPGLMCDIESYIYMPLLEETGYIPSAKYVPGEELRSHAERIAQHWGLGTRTGFGVRVEELRWDEKGIRWDVRGGRTQDPTMRWTCTADFVIIATGTLNRPRVPDLAGLDMFTGHVFHTARWDYNYTGGAPGTPALPRLDGKRVAVIGTGSTAIQIIPQLAKSAEQLFVFQRTPASVGLQRNRPTDREWWEKTIQNAAPGWQRRRAENFNAWISTPHEVLGIEEDLISDGWTSAPSFAAAIGGPLNLAPDFLHRATEVDAARRRIVHQVIETTVKDRRTAEALLNHAHGWCKRPCFHEGYFETYNLANTLLVDARDHQLHLTHDGVQVGDTVYPVDLIVLATGYELGSLCPATRAQVRIVGVGGQQMEEKWARPATLHGIMTRGFPNLFFPGTSQAGVTANQSYMFDRAAEHVAYILHALCLRRGTETRLRLQPTVEAEEQWATRSVDQARAFAATRACAVGSYTIAARYESADGAALARHLPWGEGMASYVRVLEQWREAGTMEGLEIVSE.

Positions 1–50 are disordered; it reads MASAPEVESVKTPDPASTKTQHTSIAEIHTADQTWNNESNTRLPPNHRHH. Composition is skewed to polar residues over residues 15–24 and 31–43; these read PASTKTQHTS and ADQT…NTRL. Residues 116-119, 128-129, and Tyr134 contribute to the FAD site; these read TWYW and DI. Residue 126-128 coordinates NADP(+); the sequence is MCD. Residues 269–275 and 292–293 contribute to the NADP(+) site; these read TGSTAIQ and RT.

It belongs to the FAD-binding monooxygenase family. Requires FAD as cofactor.

It catalyses the reaction protoaustinoid A + AH2 + O2 = berkeleyone A + A + H2O. The protein operates within secondary metabolite biosynthesis; terpenoid biosynthesis. In terms of biological role, FAD-binding monooxygenase; part of the gene cluster that mediates the biosynthesis of calidodehydroaustin, a fungal meroterpenoid. The first step of the pathway is the synthesis of 3,5-dimethylorsellinic acid by the polyketide synthase ausA. 3,5-dimethylorsellinic acid is then prenylated by the polyprenyl transferase ausN. Further epoxidation by the FAD-dependent monooxygenase ausM and cyclization by the probable terpene cyclase ausL lead to the formation of protoaustinoid A. Protoaustinoid A is then oxidized to spiro-lactone preaustinoid A3 by the combined action of the FAD-binding monooxygenases ausB and ausC, and the dioxygenase ausE. Acid-catalyzed keto-rearrangement and ring contraction of the tetraketide portion of preaustinoid A3 by ausJ lead to the formation of preaustinoid A4. The aldo-keto reductase ausK, with the help of ausH, is involved in the next step by transforming preaustinoid A4 into isoaustinone which is in turn hydroxylated by the P450 monooxygenase ausI to form austinolide. The cytochrome P450 monooxygenase ausG modifies austinolide to austinol. Austinol is further acetylated to austin by the O-acetyltransferase ausP, which spontaneously changes to dehydroaustin. The cytochrome P450 monooxygenase ausR then converts dehydroaustin is into 7-dehydrodehydroaustin. The hydroxylation catalyzed by ausR permits the O-acetyltransferase ausQ to add an additional acetyl group to the molecule, leading to the formation of acetoxydehydroaustin. The short chain dehydrogenase ausT catalyzes the reduction of the double bond present between carbon atoms 1 and 2 to convert 7-dehydrodehydroaustin into 1,2-dihydro-7-hydroxydehydroaustin. AusQ catalyzes not only an acetylation reaction but also the addition of the PKS ausV diketide product to 1,2-dihydro-7-hydroxydehydroaustin, forming precalidodehydroaustin. Finally, the iron/alpha-ketoglutarate-dependent dioxygenase converts precalidodehydroaustin into calidodehydroaustin. This chain is FAD-binding monooxygenase ausB, found in Aspergillus calidoustus.